Reading from the N-terminus, the 441-residue chain is Monodehydroascorbate reductase 3 (441 aa).

Residues 14 to 17, glutamate 41, arginine 48, lysine 53, isoleucine 96, and 147 to 148 each bind FAD; these read GGVA and RE. NAD(+) contacts are provided by residues 173-179, glutamate 197, arginine 203, and glycine 262; that span reads GGFLGLE. NADP(+) is bound at residue 175–179; it reads FLGLE. The NADP(+) site is built by arginine 203 and glycine 262. Aspartate 299 lines the FAD pocket. 315–316 is a binding site for NAD(+); that stretch reads EH. 315-316 serves as a coordination point for NADP(+); sequence EH. Arginine 321 provides a ligand contact to L-ascorbate. FAD is bound at residue tyrosine 350. NAD(+) is bound at residue tyrosine 350. Tyrosine 350 provides a ligand contact to NADP(+). Residue arginine 352 coordinates L-ascorbate. Position 418 is a phosphoserine (serine 418).

The protein belongs to the FAD-dependent oxidoreductase family. It depends on FAD as a cofactor.

It localises to the cytoplasm. It carries out the reaction 2 monodehydro-L-ascorbate radical + NADH + H(+) = 2 L-ascorbate + NAD(+). In terms of biological role, catalyzes the conversion of monodehydroascorbate to ascorbate, oxidizing NADH in the process. Required for producing sufficient ascorbate to maintain the interaction between Piriformospora indica and Arabidopsis in a mutualistic state. The protein is Monodehydroascorbate reductase 3 of Arabidopsis thaliana (Mouse-ear cress).